We begin with the raw amino-acid sequence, 58 residues long: MARRKKYEGLNPFVAAGLIKFSEEGEMERIKLSPKAAIAVSAAIIAALIIINLLLPPL.

The Cytoplasmic portion of the chain corresponds to 1 to 33 (MARRKKYEGLNPFVAAGLIKFSEEGEMERIKLS). Residues 34–55 (PKAAIAVSAAIIAALIIINLLL) traverse the membrane as a helical segment. The Extracellular segment spans residues 56–58 (PPL).

The protein belongs to the SEC61-beta family. Component of the protein translocase complex. Heterotrimer consisting of alpha (SecY), beta (SecG) and gamma (SecE) subunits. Can form oligomers of the heterotrimer.

Its subcellular location is the cell membrane. Involved in protein export. The function of the beta subunit is unknown, but it may be involved in stabilization of the trimeric complex. This Pyrobaculum arsenaticum (strain DSM 13514 / JCM 11321 / PZ6) protein is Preprotein translocase subunit SecG.